Consider the following 83-residue polypeptide: Cytochrome b559 subunit alpha (83 aa).

A helical transmembrane segment spans residues 21-35 (VIHSITIPSLFIAGW). H23 is a heme binding site.

Belongs to the PsbE/PsbF family. Heterodimer of an alpha subunit and a beta subunit. PSII is composed of 1 copy each of membrane proteins PsbA, PsbB, PsbC, PsbD, PsbE, PsbF, PsbH, PsbI, PsbJ, PsbK, PsbL, PsbM, PsbT, PsbX, PsbY, PsbZ, Psb30/Ycf12, at least 3 peripheral proteins of the oxygen-evolving complex and a large number of cofactors. It forms dimeric complexes. Heme b is required as a cofactor.

The protein resides in the plastid. Its subcellular location is the chloroplast thylakoid membrane. Its function is as follows. This b-type cytochrome is tightly associated with the reaction center of photosystem II (PSII). PSII is a light-driven water:plastoquinone oxidoreductase that uses light energy to abstract electrons from H(2)O, generating O(2) and a proton gradient subsequently used for ATP formation. It consists of a core antenna complex that captures photons, and an electron transfer chain that converts photonic excitation into a charge separation. The protein is Cytochrome b559 subunit alpha of Oenothera berteroana (Bertero's evening primrose).